The primary structure comprises 147 residues: Flagellar assembly factor FliW (147 aa).

It belongs to the FliW family. As to quaternary structure, interacts with translational regulator CsrA and flagellin(s).

The protein resides in the cytoplasm. Acts as an anti-CsrA protein, binds CsrA and prevents it from repressing translation of its target genes, one of which is flagellin. Binds to flagellin and participates in the assembly of the flagellum. The polypeptide is Flagellar assembly factor FliW (Chromobacterium violaceum (strain ATCC 12472 / DSM 30191 / JCM 1249 / CCUG 213 / NBRC 12614 / NCIMB 9131 / NCTC 9757 / MK)).